The following is a 158-amino-acid chain: 6,7-dimethyl-8-ribityllumazine synthase (158 aa).

5-amino-6-(D-ribitylamino)uracil contacts are provided by residues Phe24, 58–60 (AFE), and 82–84 (AVI). 87–88 (GT) provides a ligand contact to (2S)-2-hydroxy-3-oxobutyl phosphate. His90 functions as the Proton donor in the catalytic mechanism. Position 115 (Phe115) interacts with 5-amino-6-(D-ribitylamino)uracil. Arg129 contacts (2S)-2-hydroxy-3-oxobutyl phosphate.

This sequence belongs to the DMRL synthase family. As to quaternary structure, forms an icosahedral capsid composed of 60 subunits, arranged as a dodecamer of pentamers.

The catalysed reaction is (2S)-2-hydroxy-3-oxobutyl phosphate + 5-amino-6-(D-ribitylamino)uracil = 6,7-dimethyl-8-(1-D-ribityl)lumazine + phosphate + 2 H2O + H(+). Its pathway is cofactor biosynthesis; riboflavin biosynthesis; riboflavin from 2-hydroxy-3-oxobutyl phosphate and 5-amino-6-(D-ribitylamino)uracil: step 1/2. In terms of biological role, catalyzes the formation of 6,7-dimethyl-8-ribityllumazine by condensation of 5-amino-6-(D-ribitylamino)uracil with 3,4-dihydroxy-2-butanone 4-phosphate. This is the penultimate step in the biosynthesis of riboflavin. In Stutzerimonas stutzeri (strain A1501) (Pseudomonas stutzeri), this protein is 6,7-dimethyl-8-ribityllumazine synthase.